A 335-amino-acid polypeptide reads, in one-letter code: Beta-hexosaminidase (335 aa).

Substrate is bound by residues aspartate 60, arginine 68, arginine 133, and 163-164; that span reads KH. The Proton donor/acceptor role is filled by histidine 176. Aspartate 247 serves as the catalytic Nucleophile.

It belongs to the glycosyl hydrolase 3 family. NagZ subfamily.

It is found in the cytoplasm. The catalysed reaction is Hydrolysis of terminal non-reducing N-acetyl-D-hexosamine residues in N-acetyl-beta-D-hexosaminides.. Its pathway is cell wall biogenesis; peptidoglycan recycling. Its function is as follows. Plays a role in peptidoglycan recycling by cleaving the terminal beta-1,4-linked N-acetylglucosamine (GlcNAc) from peptide-linked peptidoglycan fragments, giving rise to free GlcNAc, anhydro-N-acetylmuramic acid and anhydro-N-acetylmuramic acid-linked peptides. This Stenotrophomonas maltophilia (strain R551-3) protein is Beta-hexosaminidase.